We begin with the raw amino-acid sequence, 167 residues long: S-ribosylhomocysteine lyase (167 aa).

3 residues coordinate Fe cation: histidine 54, histidine 58, and cysteine 128.

This sequence belongs to the LuxS family. Homodimer. Fe cation is required as a cofactor.

The catalysed reaction is S-(5-deoxy-D-ribos-5-yl)-L-homocysteine = (S)-4,5-dihydroxypentane-2,3-dione + L-homocysteine. In terms of biological role, involved in the synthesis of autoinducer 2 (AI-2) which is secreted by bacteria and is used to communicate both the cell density and the metabolic potential of the environment. The regulation of gene expression in response to changes in cell density is called quorum sensing. Catalyzes the transformation of S-ribosylhomocysteine (RHC) to homocysteine (HC) and 4,5-dihydroxy-2,3-pentadione (DPD). The polypeptide is S-ribosylhomocysteine lyase (Haemophilus influenzae (strain PittGG)).